We begin with the raw amino-acid sequence, 498 residues long: NAD(P)H-quinone oxidoreductase chain 4, chloroplastic (498 aa).

14 helical membrane-spanning segments follow: residues Phe4–Phe24, Tyr37–Leu57, Phe80–Ala100, Lys112–Phe129, Ile134–Met154, Phe167–Leu187, Ala208–Ile228, His242–Val262, Ala272–Ala292, Ile305–Glu325, Gly330–Gly350, Leu386–Thr406, Ile416–Ile436, and Phe463–Phe483.

The protein belongs to the complex I subunit 4 family.

The protein resides in the plastid. The protein localises to the chloroplast thylakoid membrane. The enzyme catalyses a plastoquinone + NADH + (n+1) H(+)(in) = a plastoquinol + NAD(+) + n H(+)(out). It carries out the reaction a plastoquinone + NADPH + (n+1) H(+)(in) = a plastoquinol + NADP(+) + n H(+)(out). This chain is NAD(P)H-quinone oxidoreductase chain 4, chloroplastic, found in Phaseolus vulgaris (Kidney bean).